Reading from the N-terminus, the 267-residue chain is 5'-nucleotidase SurE (267 aa).

Asp9, Asp10, Ser40, and Asn97 together coordinate a divalent metal cation.

Belongs to the SurE nucleotidase family. It depends on a divalent metal cation as a cofactor.

Its subcellular location is the cytoplasm. It catalyses the reaction a ribonucleoside 5'-phosphate + H2O = a ribonucleoside + phosphate. In terms of biological role, nucleotidase that shows phosphatase activity on nucleoside 5'-monophosphates. This chain is 5'-nucleotidase SurE, found in Helicobacter pylori (strain P12).